The chain runs to 171 residues: Ribosome maturation factor RimM (171 aa).

The region spanning 94 to 168 is the PRC barrel domain; the sequence is NDEFYKDELI…MTIVPPEIVG (75 aa).

Belongs to the RimM family. As to quaternary structure, binds ribosomal protein uS19.

It localises to the cytoplasm. Its function is as follows. An accessory protein needed during the final step in the assembly of 30S ribosomal subunit, possibly for assembly of the head region. Essential for efficient processing of 16S rRNA. May be needed both before and after RbfA during the maturation of 16S rRNA. It has affinity for free ribosomal 30S subunits but not for 70S ribosomes. The sequence is that of Ribosome maturation factor RimM from Anaplasma phagocytophilum (strain HZ).